Consider the following 288-residue polypeptide: Light-independent protochlorophyllide reductase iron-sulfur ATP-binding protein (288 aa).

Residues 10–15 (GIGKST) and K39 contribute to the ATP site. Residue S14 participates in Mg(2+) binding. C95 and C129 together coordinate [4Fe-4S] cluster. ATP-binding positions include 180-181 (NR) and 204-206 (PLL).

The protein belongs to the NifH/BchL/ChlL family. As to quaternary structure, homodimer. Protochlorophyllide reductase is composed of three subunits; ChlL, ChlN and ChlB. [4Fe-4S] cluster serves as cofactor.

It is found in the plastid. The protein resides in the chloroplast. The catalysed reaction is chlorophyllide a + oxidized 2[4Fe-4S]-[ferredoxin] + 2 ADP + 2 phosphate = protochlorophyllide a + reduced 2[4Fe-4S]-[ferredoxin] + 2 ATP + 2 H2O. It functions in the pathway porphyrin-containing compound metabolism; chlorophyll biosynthesis (light-independent). Functionally, component of the dark-operative protochlorophyllide reductase (DPOR) that uses Mg-ATP and reduced ferredoxin to reduce ring D of protochlorophyllide (Pchlide) to form chlorophyllide a (Chlide). This reaction is light-independent. The L component serves as a unique electron donor to the NB-component of the complex, and binds Mg-ATP. In Stigeoclonium helveticum (Green alga), this protein is Light-independent protochlorophyllide reductase iron-sulfur ATP-binding protein.